The primary structure comprises 176 residues: Large ribosomal subunit protein uL22 (176 aa).

The disordered stretch occupies residues 113–176; it reads VVESRPSKDQ…EISEAKGGSD (64 aa). Residues 136–152 are compositionally biased toward low complexity; sequence SKAAATAPAKKSSASKA. Residues 159–176 show a composition bias toward basic and acidic residues; it reads TKAESKTSEISEAKGGSD.

It belongs to the universal ribosomal protein uL22 family. In terms of assembly, part of the 50S ribosomal subunit.

Functionally, this protein binds specifically to 23S rRNA; its binding is stimulated by other ribosomal proteins, e.g. L4, L17, and L20. It is important during the early stages of 50S assembly. It makes multiple contacts with different domains of the 23S rRNA in the assembled 50S subunit and ribosome. In terms of biological role, the globular domain of the protein is located near the polypeptide exit tunnel on the outside of the subunit, while an extended beta-hairpin is found that lines the wall of the exit tunnel in the center of the 70S ribosome. This chain is Large ribosomal subunit protein uL22, found in Mycobacterium ulcerans (strain Agy99).